A 373-amino-acid chain; its full sequence is Glutamine synthetase (373 aa).

The residue at position 2 (Ala-2) is an N-acetylalanine. Positions 2–25 are required for glutamine-induced ubiquitination by CRL4(CRBN) and proteasomal degradation; it reads ATSASSHLNKGIKQVYMSLPQGEK. 2 positions are modified to N6-acetyllysine: Lys-11 and Lys-14. The GS beta-grasp domain maps to 24 to 106; sequence EKVQAMYIWI…VFCEVFKYNR (83 aa). A Phosphotyrosine modification is found at Tyr-104. The 261-residue stretch at 113 to 373 folds into the GS catalytic domain; it reads LRHTCKRIMD…TGDEPFQYKN (261 aa). Glu-134 provides a ligand contact to ATP. Residues Glu-134, Glu-136, Glu-196, and Glu-203 each coordinate Mn(2+). 203–208 provides a ligand contact to ATP; the sequence is EFQIGP. 246–247 lines the L-glutamate pocket; the sequence is NW. His-253 contributes to the Mn(2+) binding site. Residues 255–257, Arg-319, and Arg-324 each bind ATP; that span reads NFS. Position 319 (Arg-319) interacts with L-glutamate. An ADP-binding site is contributed by 336-338; the sequence is YFE. Residue Glu-338 participates in Mn(2+) binding. Arg-340 is an L-glutamate binding site. Ser-343 carries the post-translational modification Phosphoserine.

This sequence belongs to the glutamine synthetase family. In terms of assembly, decamer; composed of two pentamers. Interacts with PALMD. Interacts with RHOJ. Interacts with BEST2; this interaction tethers a fraction of GLUL to the membrane, causing a decrease of cytosolic glutamine synthase (GS) activity and inhibits the chloride channel activity of BEST2 by affecting the gating at the aperture in the absence of intracellular glutamate. It depends on Mg(2+) as a cofactor. Requires Mn(2+) as cofactor. In terms of processing, palmitoylated; undergoes autopalmitoylation. Post-translationally, acetylated by EP300/p300; acetylation is stimulated by increased glutamine levels and promotes ubiquitin-mediated proteasomal degradation. Ubiquitinated by ZNRF1. Ubiquitinated by the DCX (DDB1-CUL4-X-box) E3 ubiquitin-protein ligase complex called CRL4(CRBN), leading to proteasomal degradation.

Its subcellular location is the cytoplasm. It is found in the cytosol. The protein localises to the microsome. It localises to the mitochondrion. The protein resides in the cell membrane. It catalyses the reaction L-glutamate + NH4(+) + ATP = L-glutamine + ADP + phosphate + H(+). The catalysed reaction is L-cysteinyl-[protein] + hexadecanoyl-CoA = S-hexadecanoyl-L-cysteinyl-[protein] + CoA. With respect to regulation, glutamine synthetase activity is inhibited by methionine sulfoximine (MSO). Its function is as follows. Glutamine synthetase that catalyzes the ATP-dependent conversion of glutamate and ammonia to glutamine. Its role depends on tissue localization: in the brain, it regulates the levels of toxic ammonia and converts neurotoxic glutamate to harmless glutamine, whereas in the liver, it is one of the enzymes responsible for the removal of ammonia. Plays a key role in ammonium detoxification during erythropoiesis: the glutamine synthetase activity is required to remove ammonium generated by porphobilinogen deaminase (HMBS) during heme biosynthesis to prevent ammonium accumulation and oxidative stress. Essential for proliferation of fetal skin fibroblasts. Independently of its glutamine synthetase activity, required for endothelial cell migration during vascular development. Involved in angiogenesis by regulating membrane localization and activation of the GTPase RHOJ, possibly by promoting RHOJ palmitoylation. May act as a palmitoyltransferase for RHOJ: able to autopalmitoylate and then transfer the palmitoyl group to RHOJ. Plays a role in ribosomal 40S subunit biogenesis. Through the interaction with BEST2, inhibits BEST2 channel activity by affecting the gating at the aperture in the absence of intracellular L-glutamate, but sensitizes BEST2 to intracellular L-glutamate, which promotes the opening of BEST2 and thus relieves its inhibitory effect on BEST2. This is Glutamine synthetase from Canis lupus familiaris (Dog).